A 397-amino-acid polypeptide reads, in one-letter code: UPF0597 protein Tmel_1007 (397 aa).

This sequence belongs to the UPF0597 family.

In Thermosipho melanesiensis (strain DSM 12029 / CIP 104789 / BI429), this protein is UPF0597 protein Tmel_1007.